A 539-amino-acid polypeptide reads, in one-letter code: Protein ENTREP2 (539 aa).

Helical transmembrane passes span 31–51 (IVLALGATQMALGCLIVAVSF), 65–85 (SCPFWAGFSVLLSGLIGVVSW), 89–109 (LSLVITFFMLLSAVCVMLNLA), and 176–196 (LLFSVCALNVLSTIVCALATA). The tract at residues 301–481 (VVGQPPASQV…TSKERPRSLV (181 aa)) is disordered. The span at 306 to 331 (PASQVTSIGQQVAESSSGDPNTSAGF) shows a compositional bias: polar residues. Positions 347-365 (GTATPGSSPSPDGPVGAPA) are enriched in low complexity. Polar residues predominate over residues 395 to 408 (SRSTSDPTLCTSSM).

Belongs to the ENTREP family.

The protein localises to the membrane. The sequence is that of Protein ENTREP2 from Homo sapiens (Human).